Here is an 82-residue protein sequence, read N- to C-terminus: Small ribosomal subunit protein uS17 (82 aa).

Belongs to the universal ribosomal protein uS17 family. As to quaternary structure, part of the 30S ribosomal subunit.

One of the primary rRNA binding proteins, it binds specifically to the 5'-end of 16S ribosomal RNA. In Rhodopseudomonas palustris (strain BisA53), this protein is Small ribosomal subunit protein uS17.